An 81-amino-acid polypeptide reads, in one-letter code: Putative defensin-like protein 56 (81 aa).

Residues 1–23 form the signal peptide; sequence MNITKAYVIFFLVVILTNSLSNS. Intrachain disulfides connect Cys46–Cys80, Cys50–Cys73, Cys59–Cys78, and Cys63–Cys79.

Belongs to the DEFL family.

It is found in the secreted. The polypeptide is Putative defensin-like protein 56 (Arabidopsis thaliana (Mouse-ear cress)).